The following is a 137-amino-acid chain: Nucleoside diphosphate kinase (137 aa).

ATP-binding residues include Lys9, Phe58, Arg86, Thr92, Arg103, and Asn113. Catalysis depends on His121, which acts as the Pros-phosphohistidine intermediate.

Belongs to the NDK family. As to quaternary structure, homotetramer. Mg(2+) serves as cofactor.

Its subcellular location is the cytoplasm. It carries out the reaction a 2'-deoxyribonucleoside 5'-diphosphate + ATP = a 2'-deoxyribonucleoside 5'-triphosphate + ADP. The catalysed reaction is a ribonucleoside 5'-diphosphate + ATP = a ribonucleoside 5'-triphosphate + ADP. Functionally, major role in the synthesis of nucleoside triphosphates other than ATP. The ATP gamma phosphate is transferred to the NDP beta phosphate via a ping-pong mechanism, using a phosphorylated active-site intermediate. In Streptococcus pneumoniae (strain P1031), this protein is Nucleoside diphosphate kinase.